The chain runs to 272 residues: uncharacterized protein (272 aa).

Residues Asp71 and Glu163 contribute to the active site.

Belongs to the glycosyl hydrolase 25 family.

This is an uncharacterized protein from Escherichia coli (strain K12).